The chain runs to 1239 residues: Anillin (1239 aa).

4 disordered regions span residues 32–67 (CSVP…SGGG), 230–265 (EAPP…RTKQ), 493–621 (FDNQ…MCNG), and 684–716 (GSTQ…NSFS). The span at 53-63 (RSRSPGGQSAA) shows a compositional bias: low complexity. The interval 126 to 371 (EQAEGGALNP…ENKGTGGQSQ (246 aa)) is interaction with and bundling of F-actin. Basic and acidic residues predominate over residues 252 to 265 (PKKDEVDEASRTKQ). A compositionally biased stretch (low complexity) spans 500-518 (SSVAAQARPPAPAPSRVVR). Positions 519-528 (PMPPPPPPPI) are enriched in pro residues. Residues 551-563 (EDSKRARKSHSDR) show a composition bias toward basic and acidic residues. A compositionally biased stretch (acidic residues) spans 594–610 (DEEETESCMDESDDQSQ). Over residues 699–716 (ASRLSLGSKGTTASNSFS) the composition is skewed to polar residues. Serine 712 is subject to Phosphoserine. Threonine 740 is modified (phosphothreonine). 2 positions are modified to phosphoserine: serine 744 and serine 754. Threonine 831 carries the phosphothreonine modification. Residues 834-861 (DDEEMQNAREVNDASQAQDKIKKLLSEV) are a coiled coil. A PH domain is found at 1106 to 1230 (SVEYKGFLTM…WCAYLNKALT (125 aa)).

Interacts with and bundles F-actin. As to expression, accumulates in the ring canals that interconnect cells of the germline cysts in males and the ovarian follicles in females. These structures develop from arrested contractile rings after a specialized cytokinesis in which the closing of the invaginating plasma membrane is incomplete. Also concentrates in the arrested cleavage furrows that initially link the oocyte to its 15 nurse cells in the early egg chamber and is subsequently lost from these furrows as germline cell division is completed.

It localises to the nucleus. Its subcellular location is the cytoplasm. The protein resides in the cytoskeleton. It is found in the cell cortex. The protein localises to the cell projection. It localises to the cilium. Its subcellular location is the flagellum. Its function is as follows. Required for cytokinesis. Essential for the structural integrity of the cleavage furrow and for completion of cleavage furrow ingression and proper formation of the midbody. Required during cellularization of syncytial embryos for the proper formation and function of the furrow canals, the stable inward folds of the plasma membrane which separate the peripheral nuclei. Also required for the formation of the pole cells, the progenitors of the adult germline which are formed by cytokinesis of the cytoplasmic buds at the posterior pole of the syncytial embryo. Essential for embryonic viability. The polypeptide is Anillin (scra) (Drosophila melanogaster (Fruit fly)).